A 359-amino-acid chain; its full sequence is Nicotinate-nucleotide--dimethylbenzimidazole phosphoribosyltransferase (359 aa).

Residue glutamate 318 is the Proton acceptor of the active site.

It belongs to the CobT family. Homodimer.

The enzyme catalyses 5,6-dimethylbenzimidazole + nicotinate beta-D-ribonucleotide = alpha-ribazole 5'-phosphate + nicotinate + H(+). The protein operates within nucleoside biosynthesis; alpha-ribazole biosynthesis; alpha-ribazole from 5,6-dimethylbenzimidazole: step 1/2. Its function is as follows. Catalyzes the synthesis of alpha-ribazole-5'-phosphate from nicotinate mononucleotide (NAMN) and 5,6-dimethylbenzimidazole (DMB). The sequence is that of Nicotinate-nucleotide--dimethylbenzimidazole phosphoribosyltransferase from Escherichia coli O81 (strain ED1a).